The chain runs to 2143 residues: MTANNDDDIKSPIPITNKTLSQLKRFERSPGRPSSSQGEIKRKKSRLYAADGRPHSPLRARSATPTLQDQKLFNGMDSTSLLNERLQHYTLDYVSDRAQHMKNIYDPSSRWFSRSVRPEFPIEEFLPYKTESHEDQAKYLCHVLVNLYIAISSLDIQGLISISSKDLADLKKEVDDLALKTDLFRLSNNTAENDLLGNDIADYDDAEGLEDELDEYFDLAGPDFNATGKITAKSATIVNVNHWTNELKNCLHFDFPVALRKSLATVYYYLSLVQGQKVYRQMHVDMFERLVSLDDDRTNFTELLQKQGLLLDHQIMLNFLCEFLPYPDPDYARYELSSKEDLQLFRLLLKHAHNAKPFFDKSKESLLVDTMNFLLSSLAPSTMMAVMPIVTSVVPYHYHIHSKIIDYFPFCYSIWSSVSANVAIDTHMYDFVGSISKDVHNKILSSEHEKDVVGVEFGEFGIFTDDQMTFMFNRLQGHLRTDGQIHSYSRTVKPFVYAINGSKKDRFFEKLVSLAKAIETFIHPSNNGFWTKPNAKFVHAFIKSYHGRVKYEEDICARGVTNGICLTSFCHEEIVEIFLNIISLGSQNKNPDIANYYISCFAYLLELDPSNAYLIYDKILIDLYDTLADQFINSRHRIISSLKQFTRVIRFIVMDKLYRVHITNVLSMLVSKLDMNDTNLTSNLINGIVSIAAFIPIQDLTGEDDYISFESDTLPLVQQHFYHIKCGESSKTFRVDDELLNNAFKASTTVFQSMLKVYVEKIFQLVDVDLEDSLVTKINQTTMILQESMDDKIFNYFASLLQRNFWSNDSFKEKDPNYELVTIPLAALVRRNNGLSKELVRTLLFHIKEQIKRGAGSVRSTSEIQQRDVKLVLYLTALNDVLRQCHESLLEYSDELITFMKYLYDNVTNPPLDVITSIVIHSALATLCTTEITDCRLFPEDSKIPEKDRWGGLQFDPRRFDKQHLSFQWHVPSSDEITLSISILESLSEYCINNVEELMKAPRHDSEYGDMIQKYVLVMTHTLSGSSLLFDPDFNKYRTQSNLSYREKLILLKNIRENNCDPQELDIDIEQIRSGKDDEDYIESKDIEAGLNAGVSDVVQLRDEFPDELIVDEEVVSEMPSGVNTPIAGTHGTDNSAMSSDLAFRDLDIYTCNYYFGNTTEEKLQNPQYLQVHRVRARIGHFFHKLYVFLSTNFENNTNMFQILLHGLKVWFTDLGQETVFNEDPNAFIDVDFLENVQSLSHVNEPFTRTNFAIRANSLHQSRVLLHSTNRKASKLENLLLVDIIQLATSLYPDIYKPAQGTLVHCMKQLVGSYGVVINKIIPSLEKAIKDHDYMKIQVILNVLLIKKIHRKLMTDYKDIGRLIFLLIECCRVNELEIGMYADKILTDIVIGIKIPSSVCVISDQAFLPLAPPDGTINLQVEAVKLAKKKKREYYLSLLVDLQDKLLDKLDNEKDMGWKIRMFILRFVTQIQSNLESKPDKRAVFSIISQISTKHPEIIHLVVKSLLSTCNKIISLSDYEYDITRAYKNEFNPSFVEILDTSTTSFPKTFTEEMNNFDNPKYFIDLRAYVGWLCWGRLMYVMSPKALKLNLRENELEVLKTAGHLLTREFLRDVTMNLVQDNETRGVFSSGNVSFFSLVILLISSGFCELNMSDLFELCESYYNKDDKASMIMSVEIVAGLVCGSKFMSVSDLDKRDTFIENFLAKCLDYELNHDAFEIWSTLAWWLPAVVDLRRSKTFFCHFINADGMFDRESDAATHQTSKIYMLRSILMSMEFRAPDVGKLFDELVFDHPYDQVRQAVAKLLTTLVQNQSNPSISDPTTLLEAERNDPDGLGLPLKSVPEKVDAYIKKQFEIIKNLEDSVVGLNPQQFIKTDYFYRTSTIFYWIKEMARGPNKVLLVPYLVDYVLPFLIGLVKHKDVCALASLDPVRLYAGLGYMPIRKNHVAAIVDYVCSSNVALSSNQTKLQLAFIQHFLSAELLQLTEEEKNKILEFVVSNLYNEQFVEVRVRAASILSDIVHNWKEEQPLLSLIERFAKGLDVNKYTSKERQKLSKTDIKIHGNVLGLGAIISAFPYVFPLPPWIPKQLSNLSSWARTSGMTGQAAKNTISEFKKVRADTWKFDRASFNTEELEDLEGVLWRSYYA.

A disordered region spans residues 1–65; it reads MTANNDDDIK…SPLRARSATP (65 aa). Residues serine 11, serine 29, serine 56, and serine 62 each carry the phosphoserine modification. A phosphothreonine mark is found at threonine 64 and threonine 66. Serine 1041 carries the post-translational modification Phosphoserine. An HEAT 1 repeat occupies 1316–1355; sequence VVINKIIPSLEKAIKDHDYMKIQVILNVLLIKKIHRKLMT. The bromodomain-like (BRDL) stretch occupies residues 1648–1732; that stretch reads CELNMSDLFE…LAWWLPAVVD (85 aa). HEAT repeat units follow at residues 1779 to 1814, 1902 to 1941, and 1985 to 2023; these read PDVG…NQSN, YLVD…MPIR, and EEKN…NWKE. Positions 2141 to 2143 match the YYX motif motif; sequence YYA.

This sequence belongs to the BLM10 family. According to PubMed:12973301, colocalizes with nascent proteasome. According to PubMed:15778719, associates with proteasome core particles and also forms a complex with regulatory particle-core particle (RP-CP).

The protein localises to the nucleus. It is found in the cytoplasm. Associated component of the proteasome that specifically recognizes acetylated histones and promotes ATP- and ubiquitin-independent degradation of core histones during DNA damage response. Recognizes and binds acetylated histones via its bromodomain-like (BRDL) region and activates the proteasome by opening the gated channel for substrate entry. Binds to the core proteasome via its C-terminus, which occupies the same binding sites as the proteasomal ATPases, opening the closed structure of the proteasome via an active gating mechanism. Involved in DNA damage response in somatic cells: binds to acetylated histones and promotes degradation of histones following DNA double-strand breaks. In Saccharomyces cerevisiae (strain ATCC 204508 / S288c) (Baker's yeast), this protein is Proteasome activator BLM10 (BLM10).